The primary structure comprises 401 residues: Glutamyl-tRNA reductase (401 aa).

Substrate contacts are provided by residues 45–48 (TCNR), Ser101, 106–108 (EDQ), and Gln112. The active-site Nucleophile is Cys46. An NADP(+)-binding site is contributed by 177-182 (GYGDVG).

The protein belongs to the glutamyl-tRNA reductase family. Homodimer.

The catalysed reaction is (S)-4-amino-5-oxopentanoate + tRNA(Glu) + NADP(+) = L-glutamyl-tRNA(Glu) + NADPH + H(+). It participates in porphyrin-containing compound metabolism; protoporphyrin-IX biosynthesis; 5-aminolevulinate from L-glutamyl-tRNA(Glu): step 1/2. Functionally, catalyzes the NADPH-dependent reduction of glutamyl-tRNA(Glu) to glutamate 1-semialdehyde (GSA). The polypeptide is Glutamyl-tRNA reductase (Clostridium botulinum (strain Eklund 17B / Type B)).